Consider the following 264-residue polypeptide: S-adenosylmethionine decarboxylase proenzyme (264 aa).

S113 acts as the Schiff-base intermediate with substrate; via pyruvic acid in catalysis. S113 carries the pyruvic acid (Ser); by autocatalysis modification. H118 (proton acceptor; for processing activity) is an active-site residue. The active-site Proton donor; for catalytic activity is the C141.

The protein belongs to the prokaryotic AdoMetDC family. Type 2 subfamily. In terms of assembly, heterooctamer of four alpha and four beta chains arranged as a tetramer of alpha/beta heterodimers. Requires pyruvate as cofactor. Post-translationally, is synthesized initially as an inactive proenzyme. Formation of the active enzyme involves a self-maturation process in which the active site pyruvoyl group is generated from an internal serine residue via an autocatalytic post-translational modification. Two non-identical subunits are generated from the proenzyme in this reaction, and the pyruvate is formed at the N-terminus of the alpha chain, which is derived from the carboxyl end of the proenzyme. The post-translation cleavage follows an unusual pathway, termed non-hydrolytic serinolysis, in which the side chain hydroxyl group of the serine supplies its oxygen atom to form the C-terminus of the beta chain, while the remainder of the serine residue undergoes an oxidative deamination to produce ammonia and the pyruvoyl group blocking the N-terminus of the alpha chain.

The enzyme catalyses S-adenosyl-L-methionine + H(+) = S-adenosyl 3-(methylsulfanyl)propylamine + CO2. It participates in amine and polyamine biosynthesis; S-adenosylmethioninamine biosynthesis; S-adenosylmethioninamine from S-adenosyl-L-methionine: step 1/1. In terms of biological role, catalyzes the decarboxylation of S-adenosylmethionine to S-adenosylmethioninamine (dcAdoMet), the propylamine donor required for the synthesis of the polyamines spermine and spermidine from the diamine putrescine. The polypeptide is S-adenosylmethionine decarboxylase proenzyme (Pseudomonas paraeruginosa (strain DSM 24068 / PA7) (Pseudomonas aeruginosa (strain PA7))).